The primary structure comprises 404 residues: Cysteine desulfurase IscS (404 aa).

Pyridoxal 5'-phosphate contacts are provided by residues 75-76 (AT), Asn155, Gln183, and 203-205 (SAH). At Lys206 the chain carries N6-(pyridoxal phosphate)lysine. Thr243 provides a ligand contact to pyridoxal 5'-phosphate. Cys328 acts as the Cysteine persulfide intermediate in catalysis. Position 328 (Cys328) interacts with [2Fe-2S] cluster.

It belongs to the class-V pyridoxal-phosphate-dependent aminotransferase family. NifS/IscS subfamily. In terms of assembly, homodimer. Forms a heterotetramer with IscU, interacts with other sulfur acceptors. It depends on pyridoxal 5'-phosphate as a cofactor.

It is found in the cytoplasm. It catalyses the reaction (sulfur carrier)-H + L-cysteine = (sulfur carrier)-SH + L-alanine. Its pathway is cofactor biosynthesis; iron-sulfur cluster biosynthesis. Its function is as follows. Master enzyme that delivers sulfur to a number of partners involved in Fe-S cluster assembly, tRNA modification or cofactor biosynthesis. Catalyzes the removal of elemental sulfur atoms from cysteine to produce alanine. Functions as a sulfur delivery protein for Fe-S cluster synthesis onto IscU, an Fe-S scaffold assembly protein, as well as other S acceptor proteins. The chain is Cysteine desulfurase IscS from Neisseria meningitidis serogroup C / serotype 2a (strain ATCC 700532 / DSM 15464 / FAM18).